The following is a 221-amino-acid chain: Max dimerization protein 1 (221 aa).

A Nuclear localization signal motif is present at residues 21 to 49 (RREREAEHGYASMLPYNSKERDGLKRKSK). Disordered regions lie at residues 29 to 67 (GYASMLPYNSKERDGLKRKSKSKKSSSSRSTHNEMEKNR) and 178 to 221 (SSSS…SIAL). Residues 55–107 (SSRSTHNEMEKNRRAHLRLCLEKLKMLVPLGPESNRHTTLSLLMRAKLHIKKL) form the bHLH domain. Residues 193–221 (MQSICSDEGYSSSGLKSIGLQNNPKSIAL) show a composition bias toward polar residues.

Heterodimer with MAX; the interaction is required for DNA-binding. DNA binding requires dimerization with another bHLH protein; does not form homodimers, and does not bind to DNA in the absence of MAX in vitro. In terms of tissue distribution, expressed primarily in cells that have undergone terminal differentiation including notochord, floor plate and cement gland.

It is found in the nucleus. Component of a transcriptional repressor complex together with MAX. In complex with MAX binds to the core DNA sequence 5'-CAC[GA]TG-3'. Antagonizes MYC transcriptional activity by competing with MYC for MAX binding. Binds to the TERT promoter and represses telomerase expression, possibly by interfering with MYC binding. In Xenopus laevis (African clawed frog), this protein is Max dimerization protein 1 (mxd1).